A 149-amino-acid polypeptide reads, in one-letter code: Transcriptional repressor NrdR (149 aa).

A zinc finger spans residues 3-34 (CPFCAAVDTKVIDSRLVGDGSQVRRRRQCLEC). One can recognise an ATP-cone domain in the interval 49-139 (PRVIKSDDIR…VYRSFEDIRE (91 aa)).

Belongs to the NrdR family. Zn(2+) serves as cofactor.

Negatively regulates transcription of bacterial ribonucleotide reductase nrd genes and operons by binding to NrdR-boxes. The sequence is that of Transcriptional repressor NrdR from Photorhabdus laumondii subsp. laumondii (strain DSM 15139 / CIP 105565 / TT01) (Photorhabdus luminescens subsp. laumondii).